A 68-amino-acid chain; its full sequence is ATP-dependent 6-phosphofructokinase (68 aa).

Residue 17–20 participates in ATP binding; the sequence is GDGT. Asp18 is a binding site for Mg(2+). Asp48 acts as the Proton acceptor in catalysis.

This sequence belongs to the phosphofructokinase type A (PFKA) family. PPi-dependent PFK group II subfamily. Atypical ATP-dependent clade 'X' sub-subfamily. Homotetramer. It depends on Mg(2+) as a cofactor.

The protein localises to the cytoplasm. It catalyses the reaction beta-D-fructose 6-phosphate + ATP = beta-D-fructose 1,6-bisphosphate + ADP + H(+). It participates in carbohydrate degradation; glycolysis; D-glyceraldehyde 3-phosphate and glycerone phosphate from D-glucose: step 3/4. Allosterically activated by AMP. Catalyzes the phosphorylation of D-fructose 6-phosphate to fructose 1,6-bisphosphate by ATP, the first committing step of glycolysis. In Triticum aestivum (Wheat), this protein is ATP-dependent 6-phosphofructokinase (PFK).